The chain runs to 435 residues: MGSWIPKLLLLQLVLLLTKHADSSSIIKYLPGFEGPLPFELETGYIGVGDEDEDQMFYYFIKSESNPEEDPLLVWLSGGPGCSSFTGLVYENGPLGFKVEAYNGSIPTLVSTTYSWTKVANIIYLDQPVGAGFSYSRNPFADRPSDTGSAKLVNEFVRKWLAKHPDYFSNPFYVTGNSYSGKVIPAIVQEISNGNYICCKPQINLQGYVIGNPVAYYDHDKDSRIPFAHGVALISDELFESLKRSCGGSYSIVDPLNTECLKLIKDYHKCVSGIYQELILKPKCETTSPDCYTYRYLLSIYWANNEIVRRALKVVEGSKGKWERCDLSVRSNQDIKSSIPYHMNNSIKGYRSLVISGDHDMTIPFLGTQAWIRSLNYSITEKWRPWMILDQVAGYTKTYANKMTLATVKGGGHTLEYKPEENSILFKRWISGQPL.

An N-terminal signal peptide occupies residues 1 to 23 (MGSWIPKLLLLQLVLLLTKHADS). 3 disulfide bridges follow: Cys82–Cys325, Cys246–Cys260, and Cys284–Cys291. N-linked (GlcNAc...) asparagine glycosylation occurs at Asn103. Residue Ser178 is part of the active site. Asn344 carries N-linked (GlcNAc...) asparagine glycosylation. The active site involves Asp360. Asn376 carries N-linked (GlcNAc...) asparagine glycosylation. His413 is an active-site residue.

It belongs to the peptidase S10 family. As to expression, expressed in senescent leaves.

It is found in the secreted. In terms of biological role, probable carboxypeptidase. In Arabidopsis thaliana (Mouse-ear cress), this protein is Serine carboxypeptidase-like 14 (SCPL14).